We begin with the raw amino-acid sequence, 189 residues long: uncharacterized protein (189 aa).

Residues 1-19 (MKRVLFFLLMIFVSFGVIA) form the signal peptide.

This is an uncharacterized protein from Escherichia coli (strain K12).